We begin with the raw amino-acid sequence, 447 residues long: MAQKLWEKSVEVNKDIERFTVGRDREMDLYLAKHDVLGSMAHITMLESIGLLTKEELAQLLTELKDIYASAERGEFVIEEGVEDVHSQVELMLTRRLGDVGKKIHSGRSRNDQVLLDLKLFTRTQIREVAEAVEQLFHVLIRQSERYKNVLMPGYTHLQIAMPSSFGLWFGAYAESLVDDMLFLQAAFKMCNKNPLGSAAGYGSSFPLNRTMTTELLGFDSLNYNVVYAQMGRGKMERNVAFALATLAGTISKLAFDACIFNSQNFGFVKLPDECTTGSSIMPHKKNPDVFELTRAKCNKLQSLPQQIMMIANNLPSGYFRDLQIIKEVFLPAFQELKDCLQMTTYIMNEIKVNEHILDDDKYLFIFSVEEVNRLAREGMPFRDAYKKVGLDIEAGHFSHDKQVHHTHEGSIGNLCNDEISALMQRTIEGFNFQGMEQAEKTLLGRK.

Belongs to the lyase 1 family. Argininosuccinate lyase subfamily.

It is found in the cytoplasm. The enzyme catalyses 2-(N(omega)-L-arginino)succinate = fumarate + L-arginine. The protein operates within amino-acid biosynthesis; L-arginine biosynthesis; L-arginine from L-ornithine and carbamoyl phosphate: step 3/3. The polypeptide is Argininosuccinate lyase (Bacteroides fragilis (strain ATCC 25285 / DSM 2151 / CCUG 4856 / JCM 11019 / LMG 10263 / NCTC 9343 / Onslow / VPI 2553 / EN-2)).